The sequence spans 2291 residues: Protein Ycf2 (2291 aa).

Position 1645-1652 (1645-1652 (GSIGTGRS)) interacts with ATP.

It belongs to the Ycf2 family.

The protein localises to the plastid. It localises to the chloroplast stroma. In terms of biological role, probable ATPase of unknown function. Its presence in a non-photosynthetic plant (Epifagus virginiana) and experiments in tobacco indicate that it has an essential function which is probably not related to photosynthesis. The sequence is that of Protein Ycf2 from Olimarabidopsis pumila (Dwarf rocket).